A 232-amino-acid polypeptide reads, in one-letter code: MALVLQLLPLLLSKVQGNPEVSLEGNPGDRVNLSCIGVSDPTRWAWAPSFPACKGLSKGRRPILWASSSGTPTVLQHFSGRLRSLDTGIKRLELLLSAGDSGTFFCKGRQENESRTVIQVLGDKAGCRPSGSTHGSEYSKVLIPLLGFGLVLGLGALGLVWWRRSCVPPSHIAPVINAEPQRPLEQDSKISGHLDQEPNLHYADLDHSVLRRHRRMSALVPGDASTVYAVVV.

Residues 1-17 form the signal peptide; sequence MALVLQLLPLLLSKVQG. Over 18 to 140 the chain is Extracellular; the sequence is NPEVSLEGNP…GSTHGSEYSK (123 aa). N-linked (GlcNAc...) asparagine glycans are attached at residues Asn32 and Asn112. Residues 141-161 traverse the membrane as a helical segment; sequence VLIPLLGFGLVLGLGALGLVW. At 162–232 the chain is on the cytoplasmic side; sequence WRRSCVPPSH…DASTVYAVVV (71 aa). 2 short sequence motifs (ITIM motif) span residues 200 to 205 and 226 to 231; these read LHYADL and TVYAVV. Tyr202 carries the phosphotyrosine modification.

In terms of assembly, interacts (via ITIM motif) with PTPN6 and PTPN11. Binds to heparin. N-glycosylated. In terms of processing, may be O-glycosylated. Post-translationally, phosphorylated.

The protein localises to the cell membrane. Its function is as follows. Inhibitory receptor that acts as a critical regulator of hematopoietic lineage differentiation, megakaryocyte function and platelet production. Inhibits platelet aggregation and activation by agonists such as ADP and collagen-related peptide. This regulation of megakaryocate function as well as platelet production ann activation is done through the inhibition (via the 2 ITIM motifs) of the receptors CLEC1B and GP6:FcRgamma signaling. Appears to operate in a calcium-independent manner. The polypeptide is Megakaryocyte and platelet inhibitory receptor G6b (Rattus norvegicus (Rat)).